We begin with the raw amino-acid sequence, 85 residues long: Large ribosomal subunit protein bL27 (85 aa).

The segment at 1–21 (MAHKKGGGSTKNGRDSNPKYL) is disordered.

The protein belongs to the bacterial ribosomal protein bL27 family.

The chain is Large ribosomal subunit protein bL27 from Chlorobium chlorochromatii (strain CaD3).